The primary structure comprises 328 residues: MQNNNILVVGGAGYIGSHTCLQLAAKGYQPVVYDNLSNGHEEFVKWGVLEKGDIRDRQRLDEVLARHKPRAILHFAAMIEVGESVKDPAAFYDNNVIGTLTLLSAALAAGIDAFVFSSTCATYGLPDSVPMDESHKQAPINPYGRTKWICEQALKDYGLYKGLRSVILRYFNAAGADFEGRIGEWHEPETHAIPLAIDAALGRREGFKVFGTDYDTRDGTCVRDYIHVLDLADAHVRAVDYLLEGGESVALNLGTGTGTTVKELLDAIEKVAKRPFNIGYAERREGDSTTLVANNDKARQVLGWEPQYDLAAITESAWNWHSRRNQGG.

Substrate is bound at residue T119. The active-site Proton acceptor is Y143.

Belongs to the NAD(P)-dependent epimerase/dehydratase family. It depends on NAD(+) as a cofactor.

The catalysed reaction is UDP-alpha-D-glucose = UDP-alpha-D-galactose. The protein operates within carbohydrate metabolism; galactose metabolism. It functions in the pathway glycan metabolism; exopolysaccharide biosynthesis. This is UDP-glucose 4-epimerase (exoB) from Rhizobium meliloti (strain 1021) (Ensifer meliloti).